The chain runs to 79 residues: MSTIEERVKKIVVEQLGVKEEEVTTSASFVDDLGADSLDTVELVMALEEEFECEIPDEEAEKITSVQQAIDYVKAHVKS.

Positions 2–77 (STIEERVKKI…QAIDYVKAHV (76 aa)) constitute a Carrier domain. O-(pantetheine 4'-phosphoryl)serine is present on S37.

This sequence belongs to the acyl carrier protein (ACP) family. Post-translationally, 4'-phosphopantetheine is transferred from CoA to a specific serine of apo-ACP by AcpS. This modification is essential for activity because fatty acids are bound in thioester linkage to the sulfhydryl of the prosthetic group.

The protein localises to the cytoplasm. The protein operates within lipid metabolism; fatty acid biosynthesis. Functionally, carrier of the growing fatty acid chain in fatty acid biosynthesis. In Xanthomonas axonopodis pv. citri (strain 306), this protein is Acyl carrier protein.